We begin with the raw amino-acid sequence, 669 residues long: Sodium-dependent phosphate transporter (669 aa).

At 1 to 6 the chain is on the extracellular side; the sequence is MVTGPD. Residues 7–27 form a helical membrane-spanning segment; that stretch reads MLWLVITSGIACFFMAFVTGA. Residues 28–47 are Cytoplasmic-facing; the sequence is NDIANTFSTSIGSKAISIKK. A helical membrane pass occupies residues 48–68; it reads ALIVAFFFEALGASLLGGTVT. At 69–86 the chain is on the extracellular side; that stretch reads DSIRSKIINFQVFYDTPE. Residues 87–107 form a helical membrane-spanning segment; sequence FLMLGMCCALMGATVWLAVAT. Position 108 (Arg108) is a topological domain, cytoplasmic. A helical membrane pass occupies residues 109–129; sequence AGLPVSTTHSIIGALLGFGLA. Over 130-143 the chain is Extracellular; that stretch reads TGNMKSIKWEKINN. A helical transmembrane segment spans residues 144–164; the sequence is IVISWLAAPILAGTCSAIAFT. At 165-186 the chain is on the cytoplasmic side; that stretch reads VLRMLILRKKNSFEIIKKMYWF. Residues 187 to 207 form a helical membrane-spanning segment; that stretch reads LIFLITLPFSVFLIFHNPIVI. Over 208–239 the chain is Extracellular; sequence NTQCKMKKDGKVIVSSPCYIEDWSAAHSFYAS. Residues 240–260 traverse the membrane as a helical segment; the sequence is IICILLSSLLTAIGSFVIYII. At 261 to 502 the chain is on the cytoplasmic side; sequence YNKRINNYNL…YNNGIRGKIK (242 aa). Positions 311–335 are enriched in polar residues; sequence AHNNTSNGTKQNQVGNGTKSNNNNV. Disordered regions lie at residues 311 to 364 and 392 to 444; these read AHNN…SVEA and TNMN…KNME. Positions 342-352 are enriched in basic and acidic residues; that stretch reads KNVKSQQDDSK. Positions 395 to 433 are enriched in low complexity; sequence NENNNNSNKNNNSNKNNNSNKNNNSNKNNNSNNGNSNEG. The helical transmembrane segment at 503–523 threads the bilayer; sequence VQWYILLFGGLSMSLGLSIMG. Residues 524–542 lie on the Extracellular side of the membrane; that stretch reads YRVIKTVGMKLIKITPARG. A helical transmembrane segment spans residues 543–563; the sequence is FTIELISGLVVLFFSICGIPL. Topologically, residues 564–632 are cytoplasmic; sequence SSTHCAVSSV…TSCVNLRLFR (69 aa). A helical membrane pass occupies residues 633–653; sequence TVFLSWILTVVFSATVTAGIY. Over 654 to 669 the chain is Extracellular; sequence SFAAYSPSYIMKMQTV.

Belongs to the inorganic phosphate transporter (PiT) (TC 2.A.20) family.

Its subcellular location is the cell membrane. The enzyme catalyses 2 Na(+)(out) + phosphate(out) = 2 Na(+)(in) + phosphate(in). Its function is as follows. Sodium-phosphate symporter which preferentially transports the monovalent form of phosphate with a stoichiometry of two sodium ions per phosphate ion. This chain is Sodium-dependent phosphate transporter, found in Plasmodium falciparum.